The following is a 186-amino-acid chain: Methyl-CpG-binding domain-containing protein 4 (186 aa).

The CW-type zinc-finger motif lies at 22 to 77; sequence GRLIDTYAAQCDNCHKWRVIDSQEEYEDIRSKMLEDPFNCQKKQGMSCEEPADIDY. The MBD-associated domain (MAD) signature appears at 31 to 69; sequence QCDNCHKWRVIDSQEEYEDIRSKMLEDPFNCQKKQGMSC. 4 residues coordinate Zn(2+): cysteine 32, cysteine 35, cysteine 61, and cysteine 69. In terms of domain architecture, MBD spans 83–153; sequence WVIDKPGLPK…GDFNFTVPKV (71 aa). Positions 154-186 are disordered; it reads MEDTVPPDPKLGSPFPSTTTTTSEKSSVKQSHN. The segment covering 166–178 has biased composition (low complexity); sequence SPFPSTTTTTSEK.

Expressed in rosette leaves, buds, flowers, stems, mature seeds and roots.

The protein resides in the nucleus. Its function is as follows. Transcriptional regulator that binds CpG, CpNpN and CpNpG (N is A, T, or C) islands in promoters regardless the DNA methylation status. Plays probably a role in gene silencing. The polypeptide is Methyl-CpG-binding domain-containing protein 4 (MBD4) (Arabidopsis thaliana (Mouse-ear cress)).